Here is a 438-residue protein sequence, read N- to C-terminus: 2-(3-amino-3-carboxypropyl)histidine synthase subunit 1 (438 aa).

Residues 1–24 (MAALVVSETAEPGSRVGPGRGRIS) are disordered. Residues C110, C214, and C342 each contribute to the [4Fe-4S] cluster site. A disordered region spans residues 402-438 (LCQPASDKVQQGSRGGSPAPACESCNCADQKATSPAP). At S418 the chain carries Phosphoserine.

This sequence belongs to the DPH1/DPH2 family. DPH1 subfamily. As to quaternary structure, component of the 2-(3-amino-3-carboxypropyl)histidine synthase complex composed of DPH1, DPH2, DPH3 and a NADH-dependent reductase. Interacts with DPH2. Interacts with RBM8A. Requires [4Fe-4S] cluster as cofactor. Strongly expressed in kidney and liver. Moderately expressed in brain, skin and testis. Weakly expressed in heart, lung, small intestine, spleen, stomach and thymus.

The protein localises to the nucleus. It is found in the cytoplasm. It catalyses the reaction L-histidyl-[translation elongation factor 2] + S-adenosyl-L-methionine = 2-[(3S)-amino-3-carboxypropyl]-L-histidyl-[translation elongation factor 2] + S-methyl-5'-thioadenosine + H(+). The protein operates within protein modification; peptidyl-diphthamide biosynthesis. Functionally, catalyzes the first step of diphthamide biosynthesis, a post-translational modification of histidine which occurs in elongation factor 2. DPH1 and DPH2 transfer a 3-amino-3-carboxypropyl (ACP) group from S-adenosyl-L-methionine (SAM) to a histidine residue, the reaction is assisted by a reduction system comprising DPH3 and a NADH-dependent reductase. Acts as a tumor suppressor. The polypeptide is 2-(3-amino-3-carboxypropyl)histidine synthase subunit 1 (Mus musculus (Mouse)).